The sequence spans 593 residues: Progranulin (593 aa).

A signal peptide spans 1–17; it reads MWTLVSWVALTAGLVAG. An N-linked (GlcNAc...) asparagine glycan is attached at Asn-118. 2 disulfide bridges follow: Cys-126-Cys-139 and Cys-133-Cys-149. N-linked (GlcNAc...) asparagine glycans are attached at residues Asn-236 and Asn-265. Disulfide bonds link Cys-284/Cys-296, Cys-290/Cys-306, Cys-297/Cys-314, Cys-307/Cys-321, Cys-315/Cys-328, Cys-322/Cys-335, Cys-366/Cys-378, Cys-372/Cys-388, Cys-397/Cys-410, and Cys-404/Cys-416. The N-linked (GlcNAc...) asparagine glycan is linked to Asn-368. Residue Asn-530 is glycosylated (N-linked (GlcNAc...) asparagine).

It belongs to the granulin family. Progranulin is secreted as a homodimer. Interacts with SLPI; interaction protects progranulin from proteolysis. Interacts (via region corresponding to granulin-7 peptide) with CTSD; stabilizes CTSD and increases its proteolytic activity. Interacts (via region corresponding to granulin-7 peptide) with SORT1; this interaction mediates endocytosis and lysosome delivery of progranulin; interaction occurs at the neuronal cell surface in a stressed nervous system. Interacts with PSAP; facilitates lysosomal delivery of progranulin from the extracellular space and the biosynthetic pathway. Forms a complex with PSAP and M6PR; PSAP bridges the binding between progranulin and M6PR. Forms a complex with PSAP and SORT1; progranulin bridges the interaction between PSAP and SORT1; facilitates lysosomal targeting of PSAP via SORT1; interaction enhances PSAP uptake in primary cortical neurons. Interacts (via regions corresponding to granulin-2 and granulin-7 peptides) with GBA1; this interaction prevents aggregation of GBA1-SCARB2 complex via interaction with HSPA1A upon stress. Interacts (via region corresponding to granulin-7 peptide) with HSPA1A; mediates recruitment of HSPA1A to GBA1 and prevents GBA1 aggregation in response to stress. Cleaved by ELANE; proteolysis is blocked by SLPI and is concentration- and time-dependent and induces CXCL8/IL-8 production; granulin-3 and granulin-4 are resistant to ELANE. Cleaved by CTSL in lysosome thus regulating the maturation and turnover of progranulin within the lysosome. In myelogenous leukemic cell lines of promonocytic, promyelocytic, and proerythroid lineage, in fibroblasts, and very strongly in epithelial cell lines. Present in inflammatory cells and bone marrow. Highest levels in kidney.

The protein resides in the secreted. The protein localises to the lysosome. In terms of biological role, secreted protein that acts as a key regulator of lysosomal function and as a growth factor involved in inflammation, wound healing and cell proliferation. Regulates protein trafficking to lysosomes, and also the activity of lysosomal enzymes. Also facilitates the acidification of lysosomes, causing degradation of mature CTSD by CTSB. In addition, functions as a wound-related growth factor that acts directly on dermal fibroblasts and endothelial cells to promote division, migration and the formation of capillary-like tubule structures. Also promotes epithelial cell proliferation by blocking TNF-mediated neutrophil activation preventing release of oxidants and proteases. Moreover, modulates inflammation in neurons by preserving neurons survival, axonal outgrowth and neuronal integrity. Functionally, promotes proliferation of the epithelial cell line A431 in culture. Its function is as follows. Inhibits epithelial cell proliferation and induces epithelial cells to secrete IL-8. Stabilizes CTSD through interaction with CTSD leading to maintain its aspartic-type peptidase activity. In Homo sapiens (Human), this protein is Progranulin.